A 257-amino-acid chain; its full sequence is UPF0246 protein Daro_2893 (257 aa).

Belongs to the UPF0246 family.

This Dechloromonas aromatica (strain RCB) protein is UPF0246 protein Daro_2893.